Consider the following 546-residue polypeptide: 2-isopropylmalate synthase (546 aa).

Residues 8–271 (ILIFDTTLRD…NSFFGRSSDS (264 aa)) enclose the Pyruvate carboxyltransferase domain. D17, H208, H210, and N244 together coordinate Mn(2+). The segment at 408–546 (QLSHVQVSCG…EKKVFSNPKN (139 aa)) is regulatory domain.

The protein belongs to the alpha-IPM synthase/homocitrate synthase family. LeuA type 1 subfamily. Homodimer. The cofactor is Mn(2+).

The protein resides in the cytoplasm. The catalysed reaction is 3-methyl-2-oxobutanoate + acetyl-CoA + H2O = (2S)-2-isopropylmalate + CoA + H(+). It participates in amino-acid biosynthesis; L-leucine biosynthesis; L-leucine from 3-methyl-2-oxobutanoate: step 1/4. In terms of biological role, catalyzes the condensation of the acetyl group of acetyl-CoA with 3-methyl-2-oxobutanoate (2-ketoisovalerate) to form 3-carboxy-3-hydroxy-4-methylpentanoate (2-isopropylmalate). The protein is 2-isopropylmalate synthase of Prochlorococcus marinus (strain MIT 9515).